Here is a 195-residue protein sequence, read N- to C-terminus: dCTP deaminase (195 aa).

DCTP is bound by residues 105-110 (RSSLGR), aspartate 123, 131-133 (TLE), glutamine 152, tyrosine 166, lysine 173, and glutamine 177. The active-site Proton donor/acceptor is glutamate 133. The disordered stretch occupies residues 159-195 (KSPAERPYGAERGSKYQGQTGPQASRIQGDREFGGDQ). Over residues 160 to 172 (SPAERPYGAERGS) the composition is skewed to basic and acidic residues. Polar residues predominate over residues 174 to 184 (YQGQTGPQASR). The segment covering 186-195 (QGDREFGGDQ) has biased composition (basic and acidic residues).

Belongs to the dCTP deaminase family. In terms of assembly, homotrimer.

It carries out the reaction dCTP + H2O + H(+) = dUTP + NH4(+). It participates in pyrimidine metabolism; dUMP biosynthesis; dUMP from dCTP (dUTP route): step 1/2. Catalyzes the deamination of dCTP to dUTP. This chain is dCTP deaminase, found in Natronomonas pharaonis (strain ATCC 35678 / DSM 2160 / CIP 103997 / JCM 8858 / NBRC 14720 / NCIMB 2260 / Gabara) (Halobacterium pharaonis).